The sequence spans 696 residues: VAQKTVRWCTISNQEANKCSSFRENMSKAVKNGPLVSCVKKSSYLDCIKAIRDKEADAVTLDAGLVFEAGLAPYNLKPVVAEFYGQKDNPQTHYYAVAVVKKGSNFQWNQLQGKRSCHTGLGRSAGWIIPMGLLYDQLPEPRKPIEKAVASFFSSSCVPCADPVNFPKLCQQCAGKGAEKCACSNHEPYFGYAGAFNCLKEDAGDVAFVKHSTVLENLPDKADRDQYELLCRDNTRRPVDDYENCYLAQVPSHAVVARSVDGQEDSIWELLNQAQEHFGRDKSPDFQLFSSSHGKDLLFKDSANGFLKIPSKMDSSLYLGYQYVTALRNLREEISPDSSKNECKKVRWCAIGHEETQKCDAWSINSGGKIECVSAENTEDCIAKIVKGEADAMSLDGGYIYIAGKCGLVPVLAENYKTEGENCVNTPEKGYLAVAVVKKSSGPDLNWNNLKGKKSCHTAVDRTAGWNIPMGLLYNKINSCKFDQFFGEGCAPGSQRNSSLCALCIGSERAPGRECLANNHERYYGYTGAFRCLVEKGDVAFVKDQVVQQNTDGKNKDDWAKDLKQMDFELLCQNGAREPVDNAENCHLARAPNHAVVARDDKVTCVAEELLKQQAQFGRHVTDCSSSFCMFKSNTKDLLFRDDTQCLARVGKTTYESYLGADYITAVANLRKCSTSKLLEACTFHSAKNPRVETTT.

2 Transferrin-like domains span residues 6-332 (VRWC…NLRE) and 346-672 (VRWC…NLRK). 2 cysteine pairs are disulfide-bonded: C9–C47 and C19–C38. At R23 the chain carries Dimethylated arginine. N25 is a glycosylation site (N-linked (GlcNAc...) asparagine). The Fe(3+) site is built by D62 and Y94. Intrachain disulfides connect C117/C198, C157/C173, C160/C181, C170/C183, and C231/C245. Positions 119, 123, 125, and 126 each coordinate hydrogencarbonate. Y192 provides a ligand contact to Fe(3+). Residue H253 coordinates Fe(3+). 11 cysteine pairs are disulfide-bonded: C343-C605, C349-C381, C359-C372, C406-C682, C423-C646, C456-C532, C480-C673, C490-C504, C501-C515, C572-C586, and C624-C629. S374 carries the phosphoserine modification. Positions 396 and 431 each coordinate Fe(3+). Hydrogencarbonate-binding residues include T458, R462, A464, and G465. An N-linked (GlcNAc...) asparagine glycan is attached at N497. Residue Y526 participates in Fe(3+) binding. H594 is a binding site for Fe(3+). At S674 the chain carries Phosphoserine.

This sequence belongs to the transferrin family. In terms of assembly, monomer. Part of a complex composed of SLC40A1/ferroportin, TF/transferrin and HEPH/hephaestin that transfers iron from cells to transferrin. In terms of tissue distribution, expressed by the liver and secreted in plasma.

The protein localises to the secreted. In terms of biological role, transferrins are iron binding transport proteins which can bind two Fe(3+) ions in association with the binding of an anion, usually bicarbonate. It is responsible for the transport of iron from sites of absorption and heme degradation to those of storage and utilization. Serum transferrin may also have a further role in stimulating cell proliferation. In Sus scrofa (Pig), this protein is Serotransferrin (TF).